A 122-amino-acid chain; its full sequence is Large ribosomal subunit protein uL14 (122 aa).

This sequence belongs to the universal ribosomal protein uL14 family. As to quaternary structure, part of the 50S ribosomal subunit. Forms a cluster with proteins L3 and L19. In the 70S ribosome, L14 and L19 interact and together make contacts with the 16S rRNA in bridges B5 and B8.

Binds to 23S rRNA. Forms part of two intersubunit bridges in the 70S ribosome. The sequence is that of Large ribosomal subunit protein uL14 from Thermotoga petrophila (strain ATCC BAA-488 / DSM 13995 / JCM 10881 / RKU-1).